Consider the following 474-residue polypeptide: Magnesium transporter MRS2-A, chloroplastic (474 aa).

A chloroplast-targeting transit peptide spans 1-55 (MASVSSSPSYSSQAAVLLLLHQPPHQHGHGGACLRYRGSQSQGRGNAVATSLGLS). The disordered stretch occupies residues 79–129 (GKDGRAVTKDEEEEAAAAAVEEEGEVEVRREEDKPGDDGSREAAARGSGSG). The segment covering 88–103 (DEEEEAAAAAVEEEGE) has biased composition (acidic residues). Basic and acidic residues predominate over residues 104 to 122 (VEVRREEDKPGDDGSREAA). The next 2 membrane-spanning stretches (helical) occupy residues 412 to 432 (LLLQVGTFCVAIGALIAGIFG) and 444 to 464 (WAFWATTGGIVVGAVAGFFIM). The Required for magnesium transport activity motif lies at 432–434 (GMN).

This sequence belongs to the CorA metal ion transporter (MIT) (TC 1.A.35.5) family.

The protein resides in the plastid. The protein localises to the chloroplast membrane. In terms of biological role, magnesium transporter that may mediate the influx of magnesium in chloroplast. This chain is Magnesium transporter MRS2-A, chloroplastic (MRS2-A), found in Oryza sativa subsp. japonica (Rice).